A 1440-amino-acid chain; its full sequence is Protein lin-15B (1440 aa).

Disordered stretches follow at residues 1-22 (MQTL…SSSS), 48-67 (ILRH…HLDA), 618-660 (PKEE…GRPI), and 738-769 (KDEP…PSSY). Residues 10–22 (TSNPASIPTSSSS) show a composition bias toward low complexity. Residues 631–646 (STSSPATSSPTIIRPR) show a composition bias toward low complexity. Over residues 757-767 (NRTTASSQGPS) the composition is skewed to polar residues. The segment at 1135–1209 (NPGVCCFCSK…LLKGMIPDAA (75 aa)) adopts a THAP-type zinc-finger fold. 3 disordered regions span residues 1239-1281 (AIDL…EPSQ), 1298-1350 (RELS…GTSQ), and 1395-1440 (FADE…PSNE). Acidic residues predominate over residues 1254 to 1264 (TQEEEEEEEYE). The segment at residues 1317–1329 (PNPRGRPRKYPKN) is a DNA-binding region (a.T hook 1). Residues 1396–1407 (ADEEEEEEEYEE) are compositionally biased toward acidic residues. The a.T hook 2 DNA-binding region spans 1418-1430 (GRPVGRPRKDANK).

Its function is as follows. Synthetic multivulva (synMuv) class B protein. SynMuv proteins are required to repress the induction of vulval development. Acts redundantly with SynMuv class A protein lin-15A to negatively regulate vulval development. Regulates let-23 basal activity. In Caenorhabditis elegans, this protein is Protein lin-15B.